The sequence spans 264 residues: Hemin import ATP-binding protein HmuV (264 aa).

One can recognise an ABC transporter domain in the interval 2–241; sequence IEVSGVSVRL…ETMLAVFGCA (240 aa). 34–41 contributes to the ATP binding site; that stretch reads GPNGSGKT.

The protein belongs to the ABC transporter superfamily. Heme (hemin) importer (TC 3.A.1.14.5) family. As to quaternary structure, the complex is composed of two ATP-binding proteins (HmuV), two transmembrane proteins (HmuU) and a solute-binding protein (HmuT).

It localises to the cell inner membrane. Part of the ABC transporter complex HmuTUV involved in hemin import. Responsible for energy coupling to the transport system. This chain is Hemin import ATP-binding protein HmuV, found in Rhizobium johnstonii (strain DSM 114642 / LMG 32736 / 3841) (Rhizobium leguminosarum bv. viciae).